The following is a 111-amino-acid chain: Ig kappa chain V-III region PC 6684 (111 aa).

The framework-1 stretch occupies residues 1 to 23; the sequence is DIVLTQSPASLAVSLGQRATISC. The cysteines at positions 23 and 92 are disulfide-linked. The interval 24–38 is complementarity-determining-1; sequence RASKSVSTSGYSYMH. The segment at 39–53 is framework-2; sequence WYQQKPGQPPKLLIY. A complementarity-determining-2 region spans residues 54 to 60; sequence LASNLES. Positions 61 to 92 are framework-3; it reads GVPARFSGSGSGTDFTLNIHPVEEEDAATYYC. The tract at residues 93-101 is complementarity-determining-3; sequence QHSRELPRT. Residues 102–111 form a framework-4 region; sequence FGGGTKLEIK.

The polypeptide is Ig kappa chain V-III region PC 6684 (Mus musculus (Mouse)).